The sequence spans 271 residues: Tryptophan synthase alpha chain (271 aa).

Residues glutamate 49 and aspartate 60 each act as proton acceptor in the active site.

The protein belongs to the TrpA family. Tetramer of two alpha and two beta chains.

The enzyme catalyses (1S,2R)-1-C-(indol-3-yl)glycerol 3-phosphate + L-serine = D-glyceraldehyde 3-phosphate + L-tryptophan + H2O. Its pathway is amino-acid biosynthesis; L-tryptophan biosynthesis; L-tryptophan from chorismate: step 5/5. The alpha subunit is responsible for the aldol cleavage of indoleglycerol phosphate to indole and glyceraldehyde 3-phosphate. This is Tryptophan synthase alpha chain from Burkholderia multivorans (strain ATCC 17616 / 249).